Consider the following 731-residue polypeptide: Zinc finger protein 615 (731 aa).

The 72-residue stretch at 8-79 folds into the KRAB domain; sequence LTLEDVAVDF…EDEIYSRICS (72 aa). 19 consecutive C2H2-type zinc fingers follow at residues 204–226, 232–254, 260–282, 288–310, 316–338, 344–366, 372–394, 400–422, 428–450, 456–478, 484–506, 512–534, 540–562, 568–590, 596–618, 624–646, 652–674, 680–702, and 708–730; these read HVCSECGKAFLKLSQFIDHQRVH, HVCSMCGKAFSRKSRLMDHQRTH, YECTECDKTFLKKSQLNIHQKTH, YTCSQCGKAFIKKCRLIYHQRTH, HGCSVCGKAFSTKFSLTTHQKTH, YICSECGKGFIEKRRLTAHHRTH, FICNKCGKGFTLKNSLITHQQTH, YTCSECGKGFSMKHCLMVHQRTH, YKCNECGKGFALKSPLIRHQRTH, YVCTECRKGFTMKSDLIVHQRTH, YICNDCGKGFTVKSRLIVHQRTH, YVCGECGKGFPAKIRLMGHQRTH, YICNECGKGFTEKSHLNVHRRTH, YVCSECGKGLTGKSMLIAHQRTH, YICNECGKGFTMKSTLSIHQQTH, YKCNECDKTFRKKTCLIQHQRFH, FACTECGKFSLRKNDLITHQRIH, YKCSDCGKAFTTKSGLNVHQRKH, and YGCSDCGKAFAHLSILVKHRRIH.

Belongs to the krueppel C2H2-type zinc-finger protein family.

The protein localises to the nucleus. May be involved in transcriptional regulation. This chain is Zinc finger protein 615 (ZNF615), found in Homo sapiens (Human).